A 413-amino-acid chain; its full sequence is Transcription factor bHLH23 (413 aa).

The tract at residues 40 to 75 is disordered; sequence SSQTQTPSCDPPLILRGSGSGDGEGNGPLPQPPPPL. Thr-186 is subject to Phosphothreonine. At Ser-191 the chain carries Phosphoserine. Disordered stretches follow at residues 232–278 and 391–413; these read TEPV…RSRA and ETEQETMSLLLREDKRTKQKMFS. Positions 246–257 are enriched in basic and acidic residues; sequence TDERKRKTREET. Residues 277–326 enclose the bHLH domain; it reads RAAIMHKLSERRRRQKINEMMKALQELLPRCTKTDRSSMLDDVIEYVKSL.

As to quaternary structure, homodimer. In terms of tissue distribution, expressed constitutively in leaves, stems, and flowers.

The protein localises to the nucleus. The chain is Transcription factor bHLH23 (BHLH23) from Arabidopsis thaliana (Mouse-ear cress).